A 1055-amino-acid polypeptide reads, in one-letter code: MATTTLPNTKQQAAQFANSVADRAKENIDAAKEQLQKALDKLGKTGKKLTLYIPKNYKKGNGLTALIKAAQKLGIEVYHEGKDGPALTNGILNTGKKLLGLTERGLTLFAPELDKWIQGNKHLSNSVGSTGNLTKAIDKVQSVLGTLQAFLNTAFSGMDLDALIKARQNGKNVTDVQLAKASLNLINELIGTISSITNNVDTFSKQLNKLGEALGQVKHFGSFGDKLKNLPKLGNLGKGLGALSGVLSAISAALLLANKDADTATKAAAAAELTNKVLGNIGKAITQYLIAQRAAAGLSTTGPVAGLIASVVSLAISPLSFLGIAKQFDRARMLEEYSKRFKKFGYNGDSLLGQFYKNTGIADAAITTINTVLSAIAAGVGAASAGSLVGAPIGLLVSAITSLISGILDASKQAVFEHIANQLADKIKAWENKYGKNYFENGYDARHSAFLEDSLKLFNELREKYKTENILSITQQGWDQRIGELAGITRNGDRIQSGKAYVDYLKKGEELAKHSDKFTKQILDPIKGNIDLSGIKGSTTLTFLNPLLTAGKEERKTRQSGKYEFITELKVKGRTDWKVKGVPNSNGVYDFSNLIQHAVTRDNKVLEARLIANLGAKDDYVFVGSGSTIVNAGDGYDVVDYSKGRTGALTIDGRNATKAGQYKVERDLSGTQVLQETVSKQETKRGKVTDLLEYRNYKLDYYYTNKGFKAHDELNSVEEIIGSTLRDKFYGSKFNDVFHGHDGDDLIYGYDGDDRLYGDNGNDEIHGGQGNDKLYGGAGNDRLFGEYGNNYLDGGEGDDHLEGGNGSDILRGGSGNDKLFGNQGDDLLDGGEGDDQLAGGEGNDIYVYRKEYGHHTITEHSGDKDKLSLANINLKDVSFERNGNDLLLKTNNRTAVTFKGWFSKPNSSAGLDEYQRKLLEYAPEKDRARLKRQFELQRGKVDKSLNNKVEEIIGKDGERITSQDIDNLFDKSGNKKTISPQELAGLIKNKGKSSSLMSSSRSSSMLTQKSGLSNDISRIISATSGFGSSGKALSASPLQTNNNFNSYANSLATTA.

A coiled-coil region spans residues 11–49; it reads QQAAQFANSVADRAKENIDAAKEQLQKALDKLGKTGKKL. Cholesterol recognition/amino acid consensus (CRAC) region regions lie at residues 334–340 and 502–506; these read LEEYSKR and VDYLK. Hemolysin-type calcium-binding repeat units follow at residues 721 to 738, 739 to 756, 757 to 774, 775 to 792, 793 to 810, 811 to 828, and 829 to 846; these read IGST…NDVF, HGHD…DDRL, YGDN…NDKL, YGGA…NNYL, DGGE…SDIL, RGGS…DDLL, and DGGE…NDIY. Residues 795–815 are disordered; sequence GEGDDHLEGGNGSDILRGGSG. The segment at 990 to 1009 is disordered; it reads KGKSSSLMSSSRSSSMLTQK. Over residues 993 to 1006 the composition is skewed to low complexity; the sequence is SSSLMSSSRSSSML.

This sequence belongs to the RTX prokaryotic toxin (TC 1.C.11) family. Interacts specifically with the superoxide dismutase [Cu-Zn]. This interaction may protect LtxA from reactive oxygen species and reactive nitrogen species produced by host inflammatory cells during disease. Interacts with the human leukocyte adhesion glycoprotein LFA-1 (ITGAL-ITGB2). In terms of processing, acylated at Lys-562 and Lys-687 by LtxC. This modification is required for full activity. Isolated methyl esters contain palmitoyl and palmitolyl fatty acyl groups with smaller quantities of myristic and stearic fatty acids.

The protein localises to the cell outer membrane. The protein resides in the secreted. Its function is as follows. Virulence factor that plays an important role in immune evasion. Lyses human lymphocytes and monocytes. Binds to the LFA-1 integrin on the surface of the host cell and to cholesterol-containing membranes, which probably results in large LtxA-LFA-1 clusters in lipid rafts. Also shows beta-hemolytic activity on certain types of growth media. The sequence is that of Leukotoxin from Aggregatibacter actinomycetemcomitans (Actinobacillus actinomycetemcomitans).